The following is a 571-amino-acid chain: Probable pectinesterase/pectinesterase inhibitor 58 (571 aa).

Positions 1–28 (MGVDGELKKKKCIIAGVITALLVLMVVA) are cleaved as a signal peptide. Asn36, Asn91, Asn207, and Asn216 each carry an N-linked (GlcNAc...) asparagine glycan. The interval 49 to 204 (KTATTAVEAV…RELTSNGLAM (156 aa)) is pectinesterase inhibitor 58. Positions 259-556 (NVVVAHDGSG…FTPARFLRGN (298 aa)) are pectinesterase 58. Residue Thr335 participates in substrate binding. An N-linked (GlcNAc...) asparagine glycan is attached at Asn347. Residue Gln365 participates in substrate binding. The active-site Proton donor; for pectinesterase activity is the Asp388. Cysteines 402 and 422 form a disulfide. Asp409 serves as the catalytic Nucleophile; for pectinesterase activity. Substrate is bound by residues Arg477 and Trp479.

This sequence in the N-terminal section; belongs to the PMEI family. The protein in the C-terminal section; belongs to the pectinesterase family. As to expression, expressed in siliques, but not in flower buds.

The protein resides in the secreted. It is found in the cell wall. It carries out the reaction [(1-&gt;4)-alpha-D-galacturonosyl methyl ester](n) + n H2O = [(1-&gt;4)-alpha-D-galacturonosyl](n) + n methanol + n H(+). It participates in glycan metabolism; pectin degradation; 2-dehydro-3-deoxy-D-gluconate from pectin: step 1/5. Acts in the modification of cell walls via demethylesterification of cell wall pectin. The protein is Probable pectinesterase/pectinesterase inhibitor 58 (PME58) of Arabidopsis thaliana (Mouse-ear cress).